The primary structure comprises 260 residues: Imidazole glycerol phosphate synthase subunit HisF (260 aa).

Catalysis depends on residues D11 and D130.

This sequence belongs to the HisA/HisF family. As to quaternary structure, heterodimer of HisH and HisF.

Its subcellular location is the cytoplasm. It carries out the reaction 5-[(5-phospho-1-deoxy-D-ribulos-1-ylimino)methylamino]-1-(5-phospho-beta-D-ribosyl)imidazole-4-carboxamide + L-glutamine = D-erythro-1-(imidazol-4-yl)glycerol 3-phosphate + 5-amino-1-(5-phospho-beta-D-ribosyl)imidazole-4-carboxamide + L-glutamate + H(+). It participates in amino-acid biosynthesis; L-histidine biosynthesis; L-histidine from 5-phospho-alpha-D-ribose 1-diphosphate: step 5/9. Functionally, IGPS catalyzes the conversion of PRFAR and glutamine to IGP, AICAR and glutamate. The HisF subunit catalyzes the cyclization activity that produces IGP and AICAR from PRFAR using the ammonia provided by the HisH subunit. This Desulfatibacillum aliphaticivorans protein is Imidazole glycerol phosphate synthase subunit HisF.